Reading from the N-terminus, the 283-residue chain is Small ribosomal subunit protein uS3 (283 aa).

The KH type-2 domain occupies 39 to 107 (VRAYLKTKLK…PVHVNIEEIR (69 aa)). A disordered region spans residues 219-283 (ASDDDKKRRG…AAVSAEKAGE (65 aa)). Over residues 221 to 236 (DDDKKRRGPRRDDGKP) the composition is skewed to basic and acidic residues. Positions 237-260 (SGRPRAPRPEGQPGAAAPGSAPAA) are enriched in low complexity.

It belongs to the universal ribosomal protein uS3 family. Part of the 30S ribosomal subunit. Forms a tight complex with proteins S10 and S14.

In terms of biological role, binds the lower part of the 30S subunit head. Binds mRNA in the 70S ribosome, positioning it for translation. This Janthinobacterium sp. (strain Marseille) (Minibacterium massiliensis) protein is Small ribosomal subunit protein uS3.